The following is a 602-amino-acid chain: Beta-(1--&gt;2)glucan export ATP-binding/permease protein NdvA (602 aa).

An ABC transmembrane type-1 domain is found at 21-311 (GWTLAVANLL…VVSFVNSLMM (291 aa)). Transmembrane regions (helical) follow at residues 22–42 (WTLAVANLLLATAQFAEPVLF), 68–88 (LLAAWVGFGLFTILCSATVAL), 146–166 (EHFAAILSLVVLLPLSLYINW), 167–187 (RLAILLFALCGVFTVLTTLVV), 254–274 (VITRASTTITVLAIFSLGIAL), and 276–296 (QQGLTSVGEIVMFVSFATLLI). The ABC transporter domain maps to 345 to 579 (VEFLDVSFSY…RGRFAELARA (235 aa)). 378-385 (GATGAGKS) is an ATP binding site.

This sequence belongs to the ABC transporter superfamily. Beta-(1--&gt;2)glucan exporter (TC 3.A.1.108.1) family. In terms of assembly, homodimer.

It is found in the cell inner membrane. The enzyme catalyses [(1-&gt;2)-beta-D-glucosyl](n)(in) + ATP + H2O = [(1-&gt;2)-beta-D-glucosyl](n)(out) + ADP + phosphate + H(+). Involved in beta-(1--&gt;2)glucan export. Transmembrane domains (TMD) form a pore in the inner membrane and the ATP-binding domain (NBD) is responsible for energy generation. This Rhodopseudomonas palustris (strain BisB5) protein is Beta-(1--&gt;2)glucan export ATP-binding/permease protein NdvA.